Consider the following 1503-residue polypeptide: Mitogen-activated protein kinase-binding protein 1 (1503 aa).

12 WD repeats span residues 89 to 130 (SSRK…QVAE), 133 to 174 (EHKY…VVAS), 176 to 214 (KVSS…TSKV), 271 to 310 (VELR…FLST), 337 to 376 (ARYP…KVGK), 382 to 431 (YHSS…VHGS), 472 to 511 (DPRV…EMLK), 514 to 556 (AHDS…SLQQ), 560 to 601 (EHSS…EGVQ), 609 to 648 (VRKT…QKKL), 654 to 693 (GEDG…CVAT), and 696 to 735 (GHSE…TISM). Disordered stretches follow at residues 745 to 817 (RQRG…SSPA), 874 to 917 (LAPS…RLQT), and 951 to 1176 (VYPE…SWAS). Residues 784-796 (KEGEDEGTEEEEL) show a composition bias toward acidic residues. Polar residues-rich tracts occupy residues 905–917 (CVSQ…RLQT) and 957–972 (DSPT…QAPT). Positions 1028-1043 (DLEEPAEGDEDEEEEG) are enriched in acidic residues. Basic and acidic residues predominate over residues 1058–1068 (PDQEQFLKQHF). The span at 1089-1129 (SQSISSRFLLQVQTSPLREPSLSSSGLALTSRPDQVSQVSG) shows a compositional bias: polar residues. Ser-1193 carries the phosphoserine modification. 2 disordered regions span residues 1217–1238 (QGSL…SYQN) and 1369–1391 (QGPE…SSRP).

In terms of assembly, can form homodimers (via C-terminus). Interacts (via C-terminus) with WDR62 (via C-terminus). Interacts with MAPK9. Interacts (via N-terminus) with NOD2; the interaction is enhanced in presence of muramyl dipeptide (MDP). Interacts with MAPK10. In terms of tissue distribution, ubiquitously expressed. Highest expression observed in brain.

Its subcellular location is the cytoplasm. It is found in the nucleus. It localises to the cytoskeleton. The protein localises to the spindle pole. Functionally, negative regulator of NOD2 function. It down-regulates NOD2-induced processes such as activation of NF-kappa-B signaling, IL8 secretion and antibacterial response. Involved in JNK signaling pathway. The chain is Mitogen-activated protein kinase-binding protein 1 (Mapkbp1) from Mus musculus (Mouse).